Reading from the N-terminus, the 440-residue chain is Protein naked cuticle homolog 1 (440 aa).

A lipid anchor (N-myristoyl glycine) is attached at G2. The 36-residue stretch at 129–164 (EEDNRQEWTFTLYDFDNNGKVTREDITSLLHTIYEV) folds into the EF-hand domain. Residues D142, D144, N146, K148, and D153 each coordinate Ca(2+). A compositionally biased stretch (polar residues) spans 192–204 (RWKNCTQTNTDTP). Disordered regions lie at residues 192 to 221 (RWKN…KTSE), 272 to 379 (AAPA…QRPK), and 421 to 440 (RHEH…FYQS). Residues 211–221 (EKCIEDSKTSE) are compositionally biased toward basic and acidic residues. Over residues 272–293 (AAPATEPAKPTHATRSSNQSRS) the composition is skewed to low complexity. Positions 324 to 336 (RHTHALRSPKTHR) are enriched in basic residues. Residues 352–362 (APPPPSVPNQT) are compositionally biased toward pro residues. The span at 422 to 440 (HEHHHHHEHHHHYHHFYQS) shows a compositional bias: basic residues.

It belongs to the NKD family.

The protein resides in the cell membrane. It is found in the cytoplasm. Cell autonomous antagonist of the canonical Wnt signaling pathway. May activate a second Wnt signaling pathway that controls planar cell polarity. The polypeptide is Protein naked cuticle homolog 1 (nkd1) (Danio rerio (Zebrafish)).